Consider the following 232-residue polypeptide: Sugar fermentation stimulation protein homolog (232 aa).

Belongs to the SfsA family.

The chain is Sugar fermentation stimulation protein homolog from Shouchella clausii (strain KSM-K16) (Alkalihalobacillus clausii).